The chain runs to 955 residues: Glycine dehydrogenase (decarboxylating) (955 aa).

Lys705 carries the N6-(pyridoxal phosphate)lysine modification.

The protein belongs to the GcvP family. As to quaternary structure, the glycine cleavage system is composed of four proteins: P, T, L and H. Requires pyridoxal 5'-phosphate as cofactor.

The enzyme catalyses N(6)-[(R)-lipoyl]-L-lysyl-[glycine-cleavage complex H protein] + glycine + H(+) = N(6)-[(R)-S(8)-aminomethyldihydrolipoyl]-L-lysyl-[glycine-cleavage complex H protein] + CO2. Functionally, the glycine cleavage system catalyzes the degradation of glycine. The P protein binds the alpha-amino group of glycine through its pyridoxal phosphate cofactor; CO(2) is released and the remaining methylamine moiety is then transferred to the lipoamide cofactor of the H protein. In Aliivibrio fischeri (strain ATCC 700601 / ES114) (Vibrio fischeri), this protein is Glycine dehydrogenase (decarboxylating).